The sequence spans 1946 residues: Chromodomain-helicase-DNA-binding protein 5 (1946 aa).

Disordered stretches follow at residues 1-140 (MRGP…SGQL), 236-272 (VPQT…GRGK), and 285-340 (SKRK…GDGY). 2 stretches are compositionally biased toward acidic residues: residues 17 to 37 (EEME…EGFE) and 72 to 90 (NDEM…ESEG). 2 stretches are compositionally biased toward basic residues: residues 96-118 (TKKK…KRKK) and 254-272 (GVRK…GRGK). Positions 293–303 (SEEDEREDSDL) are enriched in acidic residues. Residues 323–332 (KKNKRRRKKK) are compositionally biased toward basic residues. 2 PHD-type zinc fingers span residues 345–392 (QDYC…CEKE) and 418–465 (MEFC…CTCP). Residues 345 to 655 (QDYCEVCQQG…HRELMLGEDA (311 aa)) form a histone-binding region. Residues 499–556 (MPPPRPLEGIPEREFFVKWAGLSYWHCSWVKELQLELYHTVMYRNYQRKNDMDEPPPF) form the Chromo 1 domain. The segment at 551 to 573 (DEPPPFDYGSGDEDGKSEKRKNK) is disordered. A compositionally biased stretch (basic and acidic residues) spans 563–573 (EDGKSEKRKNK). The Chromo 2 domain occupies 594–655 (MMVHRILNHS…HRELMLGEDA (62 aa)). Residues 714 to 898 (RFSWAQGTDT…FHLLNFLTPE (185 aa)) form the Helicase ATP-binding domain. 727-734 (DEMGLGKT) is an ATP binding site. Positions 849–852 (DEAH) match the DEAH box motif. In terms of domain architecture, Helicase C-terminal spans 1030–1195 (LLQKMLKKLR…MTKQELDDIL (166 aa)). Disordered stretches follow at residues 1210–1254 (MMSQ…VEDS), 1353–1413 (YNDA…LPPL), 1525–1566 (KYST…APLG), 1579–1696 (DEKE…EDKN), and 1926–1946 (SFPA…LQPF). The segment covering 1212 to 1230 (SQGQRPTTPIPDIQSTKGG) has biased composition (polar residues). Composition is skewed to acidic residues over residues 1357–1368 (SQEDQEWQDELS) and 1378–1387 (SEDEDEDFEE). Glutamine 1392 carries the post-translational modification N5-methylglutamine. A compositionally biased stretch (pro residues) spans 1551–1564 (TPVPASPAQLPPAP). Serine 1556 bears the Phosphoserine mark. Composition is skewed to basic and acidic residues over residues 1602–1629 (DRVE…EVEK), 1637–1654 (PLKE…DKPE), and 1661–1676 (GDFR…KEPG).

Belongs to the SNF2/RAD54 helicase family. As to quaternary structure, component of the nucleosome remodeling and deacetylase (NuRD) repressor complex, composed of core proteins MTA1, MTA2, MTA3, RBBP4, RBBP7, HDAC1, HDAC2, MBD2, MBD3, and peripherally associated proteins CDK2AP1, CDK2AP2, GATAD2A, GATAD2B, CHD3, CHD4 and CHD5. The exact stoichiometry of the NuRD complex is unknown, and some subunits such as MBD2 and MBD3, GATAD2A and GATAD2B, and CHD3, CHD4 and CHD5 define mutually exclusive NuRD complexes. Interacts with HDAC2. Post-translationally, methylated at Gln-1392 by N6AMT1. Specifically expressed by neurons in brain, retina and adrenal gland (at protein level). Also detected in testis.

The protein resides in the nucleus. Its subcellular location is the chromosome. It catalyses the reaction ATP + H2O = ADP + phosphate + H(+). Functionally, ATP-dependent chromatin-remodeling factor that binds DNA through histones and regulates gene transcription. May specifically recognize and bind trimethylated 'Lys-27' (H3K27me3) and non-methylated 'Lys-4' of histone H3. Acts as a component of the histone deacetylase NuRD complex which participates in the remodeling of chromatin. Plays a role in the development of the nervous system by activating the expression of genes promoting neuron terminal differentiation. In parallel, it may also positively regulate the trimethylation of histone H3 at 'Lys-27' thereby specifically repressing genes that promote the differentiation into non-neuronal cell lineages. Regulates the expression of genes involved in cell proliferation and differentiation. Downstream activated genes may include CDKN2A that positively regulates the p53/TP53 pathway, which in turn, prevents cell proliferation. In spermatogenesis, it probably regulates histone hyperacetylation and the replacement of histones by transition proteins in chromatin, a crucial step in the condensation of spermatid chromatin and the production of functional spermatozoa. This Mus musculus (Mouse) protein is Chromodomain-helicase-DNA-binding protein 5 (Chd5).